A 460-amino-acid chain; its full sequence is tRNA modification GTPase MnmE (460 aa).

3 residues coordinate (6S)-5-formyl-5,6,7,8-tetrahydrofolate: Arg22, Glu83, and Lys122. The TrmE-type G domain maps to 219 to 381 (GIKTLIIGRP…LQQTILKKFQ (163 aa)). Residue Asn229 coordinates K(+). Residues 229 to 234 (NVGKSS), 248 to 254 (SDISGTT), and 273 to 276 (DTAG) contribute to the GTP site. Ser233 serves as a coordination point for Mg(2+). Ser248, Ile250, and Thr253 together coordinate K(+). Thr254 contributes to the Mg(2+) binding site. Lys460 provides a ligand contact to (6S)-5-formyl-5,6,7,8-tetrahydrofolate.

The protein belongs to the TRAFAC class TrmE-Era-EngA-EngB-Septin-like GTPase superfamily. TrmE GTPase family. Homodimer. Heterotetramer of two MnmE and two MnmG subunits. Requires K(+) as cofactor.

It is found in the cytoplasm. Exhibits a very high intrinsic GTPase hydrolysis rate. Involved in the addition of a carboxymethylaminomethyl (cmnm) group at the wobble position (U34) of certain tRNAs, forming tRNA-cmnm(5)s(2)U34. The sequence is that of tRNA modification GTPase MnmE from Aster yellows witches'-broom phytoplasma (strain AYWB).